The following is a 403-amino-acid chain: Leu/Ile/Val-binding protein homolog 8 (403 aa).

An N-terminal signal peptide occupies residues 1 to 26; that stretch reads MRLSRLLIGASLGVALSSTVFTAALA.

Belongs to the leucine-binding protein family.

Component of an amino-acid transport system. In Brucella melitensis biotype 1 (strain ATCC 23456 / CCUG 17765 / NCTC 10094 / 16M), this protein is Leu/Ile/Val-binding protein homolog 8.